The sequence spans 188 residues: Large ribosomal subunit protein uL5 (188 aa).

It belongs to the universal ribosomal protein uL5 family. Part of the 50S ribosomal subunit; contacts the 5S rRNA and probably tRNA. Forms a bridge to the 30S subunit in the 70S ribosome.

This is one of the proteins that bind and probably mediate the attachment of the 5S RNA into the large ribosomal subunit, where it forms part of the central protuberance. In the 70S ribosome it contacts protein S13 of the 30S subunit (bridge B1b), connecting the 2 subunits; this bridge is implicated in subunit movement. May contact the P site tRNA; the 5S rRNA and some of its associated proteins might help stabilize positioning of ribosome-bound tRNAs. In Pyrococcus abyssi (strain GE5 / Orsay), this protein is Large ribosomal subunit protein uL5.